We begin with the raw amino-acid sequence, 252 residues long: Aliphatic sulfonates import ATP-binding protein SsuB 1 (252 aa).

In terms of domain architecture, ABC transporter spans 6-234 (LQLHIAGKRF…PRDRQAHEAA (229 aa)). 38–45 (GASGCGKS) provides a ligand contact to ATP.

Belongs to the ABC transporter superfamily. Aliphatic sulfonates importer (TC 3.A.1.17.2) family. As to quaternary structure, the complex is composed of two ATP-binding proteins (SsuB), two transmembrane proteins (SsuC) and a solute-binding protein (SsuA).

Its subcellular location is the cell inner membrane. It catalyses the reaction ATP + H2O + aliphatic sulfonate-[sulfonate-binding protein]Side 1 = ADP + phosphate + aliphatic sulfonateSide 2 + [sulfonate-binding protein]Side 1.. In terms of biological role, part of the ABC transporter complex SsuABC involved in aliphatic sulfonates import. Responsible for energy coupling to the transport system. This chain is Aliphatic sulfonates import ATP-binding protein SsuB 1, found in Xanthomonas axonopodis pv. citri (strain 306).